Here is a 282-residue protein sequence, read N- to C-terminus: Ribonuclease P protein subunit p38 (282 aa).

2 disordered regions span residues 1–21 (MAAA…PLPV) and 61–103 (EDRK…QASG). Position 2 is an N-acetylalanine (alanine 2). Position 12 is a phosphoserine (serine 12). Basic and acidic residues predominate over residues 88–97 (EDLKKEKPKG). Serine 226 and serine 235 each carry phosphoserine. A disordered region spans residues 262-282 (KLIPNPNKIRKPPKSKRTASK). Residues 269–282 (KIRKPPKSKRTASK) are compositionally biased toward basic residues.

It belongs to the eukaryotic ribosomal protein eL8 family. As to quaternary structure, component of nuclear RNase P and RNase MRP ribonucleoproteins. RNase P consists of a catalytic RNA moiety and about 10 protein subunits; POP1, POP4, POP5, POP7, RPP14, RPP21, RPP25, RPP30, RPP38 and RPP40. Within the RNase P complex, POP1, POP7 and RPP25 form the 'finger' subcomplex, POP5, RPP14, RPP40 and homodimeric RPP30 form the 'palm' subcomplex, and RPP21, POP4 and RPP38 form the 'wrist' subcomplex. All subunits of the RNase P complex interact with the catalytic RNA. Several subunits of RNase P are also part of the RNase MRP complex. RNase MRP consists of a catalytic RNA moiety and about 8 protein subunits; POP1, POP7, RPP25, RPP30, RPP38, RPP40 and possibly also POP4 and POP5.

It localises to the nucleus. The protein resides in the nucleolus. Its function is as follows. Component of ribonuclease P, a ribonucleoprotein complex that generates mature tRNA molecules by cleaving their 5'-ends. Also a component of the MRP ribonuclease complex, which cleaves pre-rRNA sequences. This chain is Ribonuclease P protein subunit p38 (RPP38), found in Bos taurus (Bovine).